Consider the following 122-residue polypeptide: Large ribosomal subunit protein uL14 (122 aa).

The protein belongs to the universal ribosomal protein uL14 family. In terms of assembly, part of the 50S ribosomal subunit. Forms a cluster with proteins L3 and L19. In the 70S ribosome, L14 and L19 interact and together make contacts with the 16S rRNA in bridges B5 and B8.

Binds to 23S rRNA. Forms part of two intersubunit bridges in the 70S ribosome. The sequence is that of Large ribosomal subunit protein uL14 from Listeria monocytogenes serotype 4b (strain CLIP80459).